Reading from the N-terminus, the 418-residue chain is Tyrosine--tRNA ligase (418 aa).

L-tyrosine is bound at residue Tyr-38. Residues Cys-43–Ser-52 carry the 'HIGH' region motif. L-tyrosine is bound by residues Tyr-175 and Gln-179. The 'KMSKS' region motif lies at Lys-235–Thr-239. Lys-238 is an ATP binding site. An S4 RNA-binding domain is found at Leu-348–Val-413.

This sequence belongs to the class-I aminoacyl-tRNA synthetase family. TyrS type 1 subfamily. In terms of assembly, homodimer.

The protein resides in the cytoplasm. It catalyses the reaction tRNA(Tyr) + L-tyrosine + ATP = L-tyrosyl-tRNA(Tyr) + AMP + diphosphate + H(+). Catalyzes the attachment of tyrosine to tRNA(Tyr) in a two-step reaction: tyrosine is first activated by ATP to form Tyr-AMP and then transferred to the acceptor end of tRNA(Tyr). This is Tyrosine--tRNA ligase from Ehrlichia ruminantium (strain Gardel).